Here is a 154-residue protein sequence, read N- to C-terminus: Protein disulfide-isomerase LQY1, chloroplastic (154 aa).

Residues 1–43 (MPVSAPSPPRLHSPFIHCPINFTPSSFSARNLRSPSTSYPRIK) constitute a chloroplast transit peptide. A helical transmembrane segment spans residues 51 to 71 (VVAISVGVASVALGIGIPVFY). The segment at 77-147 (NAAKRENTQP…SGVQPRYLDR (71 aa)) adopts a CR-type zinc-finger fold. Residues Cys-87, Cys-90, Cys-98, Cys-101, Cys-121, Cys-124, Cys-132, and Cys-135 each coordinate Zn(2+).

Belongs to the BSD2 chaperone family. Interacts with the photosystem II core subunits. Interacts with HHL1. Zn(2+) serves as cofactor.

The protein resides in the plastid. It is found in the chloroplast thylakoid membrane. It catalyses the reaction Catalyzes the rearrangement of -S-S- bonds in proteins.. Its function is as follows. Protein disulfide-isomerase probably involved upon formation of a complex with HHL1 in maintaining photosystem II (PSII) activity under high light by regulating repair and reassembly of PSII complexes. The protein is Protein disulfide-isomerase LQY1, chloroplastic of Arabidopsis thaliana (Mouse-ear cress).